Reading from the N-terminus, the 401-residue chain is Arylacetamide deacetylase-like 2 (401 aa).

A signal peptide spans 1–18 (MGLKALCLGLLCVLFVSH). The Involved in the stabilization of the negatively charged intermediate by the formation of the oxyanion hole motif lies at 111-113 (HGG). A disulfide bridge connects residues cysteine 116 and cysteine 338. Active-site residues include serine 189, aspartate 341, and histidine 371.

It belongs to the 'GDXG' lipolytic enzyme family.

Its subcellular location is the secreted. In Homo sapiens (Human), this protein is Arylacetamide deacetylase-like 2 (AADACL2).